The sequence spans 262 residues: Acyl-[acyl-carrier-protein]--UDP-N-acetylglucosamine O-acyltransferase (262 aa).

It belongs to the transferase hexapeptide repeat family. LpxA subfamily. Homotrimer.

The protein localises to the cytoplasm. It carries out the reaction a (3R)-hydroxyacyl-[ACP] + UDP-N-acetyl-alpha-D-glucosamine = a UDP-3-O-[(3R)-3-hydroxyacyl]-N-acetyl-alpha-D-glucosamine + holo-[ACP]. Its pathway is glycolipid biosynthesis; lipid IV(A) biosynthesis; lipid IV(A) from (3R)-3-hydroxytetradecanoyl-[acyl-carrier-protein] and UDP-N-acetyl-alpha-D-glucosamine: step 1/6. Involved in the biosynthesis of lipid A, a phosphorylated glycolipid that anchors the lipopolysaccharide to the outer membrane of the cell. This chain is Acyl-[acyl-carrier-protein]--UDP-N-acetylglucosamine O-acyltransferase, found in Photorhabdus laumondii subsp. laumondii (strain DSM 15139 / CIP 105565 / TT01) (Photorhabdus luminescens subsp. laumondii).